The primary structure comprises 859 residues: MQEQYNPSEIEALVQKHWHDNKTFEVTEDANKEKFYCLSMFPYPSGRLHMGHVRNYTIGDVVARFQRLQGKNVLQPIGWDSFGLPAENAAINNKTAPAPWTYQNIEYMKNQLKLLGFGYDWSREIATCTPEYYRWEQWFFTKLYEKGLVYKKTASVNWCPNDETVLANEQVQDGCCWRCDTPVEQKEIPQWFIKITAYAEELLNDIDTLDGWPEQVKTMQRNWIGRSEGVEMTFGVAGSDKSFDIYTTRPDTLMGVTYVAIAAGHPLAELAAQTNPELAQFIEECKNSTTSEADLATMEKRGVATGLYAIHPITGKQVPIWAANFVLMNYGTGAVMSVPGHDQRDYEFAKKYNLPIEAVIKPVDGELDISEAAYTEKGVLFNSGEFDGLDFDGAFNAIADKLVAEGKGKRQVNYRLRDWGVSRQRYWGAPIPMVTLADGTVIPTPEDQLPVILPEDVVMDGIQSPIKADKEWAKTQVNGQDALRETDTFDTFMESSWYYARYCSPQADQMLDPTKANYWLPVDQYIGGIEHACMHLLYFRFFHKLLRDAGLVNSNEPAKQLLTQGMVLADAFYYTNDKGARVWVSPLDVVTTEKDDKGRVTKAIDKDGNELVYTGMCKMSKSKNNGIDPQVMVEKYGADTVRLFMMFASPPELTLEWQESGVEGAHRFIKRLWKLASDYVAQDNSEALDVSKLTSEQKALRREVHKTIAKVTDDIGRRQMFNTAVAAVMELMNHLQKAPQTTGQDRAIIGEALTAVVRLLYPIIPHVSFTLWNELGNTNSIEDSQWPVVDESALVEDSKLIVVQVNGKVRAKITVAADADQASVEALGMADEQVIKYLDGVTVRKVIYVPGKLLSIVAN.

The 'HIGH' region signature appears at 42–52 (PYPSGRLHMGH). Positions 618-622 (KMSKS) match the 'KMSKS' region motif. Lys621 is an ATP binding site.

It belongs to the class-I aminoacyl-tRNA synthetase family.

The protein resides in the cytoplasm. It catalyses the reaction tRNA(Leu) + L-leucine + ATP = L-leucyl-tRNA(Leu) + AMP + diphosphate. The chain is Leucine--tRNA ligase from Shewanella sp. (strain ANA-3).